The primary structure comprises 117 residues: Ribonuclease P protein component 4 (117 aa).

Residues Cys-63, Cys-66, Cys-92, and Cys-95 each coordinate Zn(2+).

The protein belongs to the eukaryotic/archaeal RNase P protein component 4 family. Consists of a catalytic RNA component and at least 4 protein subunits. Forms a subcomplex with Rnp1 which stimulates the catalytic RNA. It depends on Zn(2+) as a cofactor.

The protein localises to the cytoplasm. It carries out the reaction Endonucleolytic cleavage of RNA, removing 5'-extranucleotides from tRNA precursor.. Functionally, part of ribonuclease P, a protein complex that generates mature tRNA molecules by cleaving their 5'-ends. The RNA is catalytic, but its KM for pre-tRNA is 170-fold decreased in the presence of the 4 known protein subunits (Rnp1-4). The protein subunits also decrease the amount of Mg(2+) needed for activity. This chain is Ribonuclease P protein component 4, found in Pyrococcus furiosus (strain ATCC 43587 / DSM 3638 / JCM 8422 / Vc1).